Reading from the N-terminus, the 225-residue chain is UPF0758 protein SZO_09140 (225 aa).

The MPN domain occupies proline 102–leucine 224. Zn(2+) contacts are provided by histidine 173, histidine 175, and aspartate 186. Residues histidine 173 to aspartate 186 carry the JAMM motif motif.

The protein belongs to the UPF0758 family.

The polypeptide is UPF0758 protein SZO_09140 (Streptococcus equi subsp. zooepidemicus (strain H70)).